Here is a 220-residue protein sequence, read N- to C-terminus: Deoxyribose-phosphate aldolase (220 aa).

Aspartate 89 acts as the Proton donor/acceptor in catalysis. The Schiff-base intermediate with acetaldehyde role is filled by lysine 151. The Proton donor/acceptor role is filled by lysine 180.

This sequence belongs to the DeoC/FbaB aldolase family. DeoC type 1 subfamily.

Its subcellular location is the cytoplasm. It catalyses the reaction 2-deoxy-D-ribose 5-phosphate = D-glyceraldehyde 3-phosphate + acetaldehyde. Its pathway is carbohydrate degradation; 2-deoxy-D-ribose 1-phosphate degradation; D-glyceraldehyde 3-phosphate and acetaldehyde from 2-deoxy-alpha-D-ribose 1-phosphate: step 2/2. Functionally, catalyzes a reversible aldol reaction between acetaldehyde and D-glyceraldehyde 3-phosphate to generate 2-deoxy-D-ribose 5-phosphate. The protein is Deoxyribose-phosphate aldolase of Streptococcus pneumoniae serotype 2 (strain D39 / NCTC 7466).